A 576-amino-acid chain; its full sequence is Type II restriction enzyme BsuRI (576 aa).

As to quaternary structure, monomer. It depends on Mg(2+) as a cofactor.

It carries out the reaction Endonucleolytic cleavage of DNA to give specific double-stranded fragments with terminal 5'-phosphates.. A P subtype restriction enzyme that recognizes the double-stranded sequence 5'-GGCC-3' and cleaves after G-2. This chain is Type II restriction enzyme BsuRI (hsdRR), found in Bacillus subtilis.